Consider the following 350-residue polypeptide: Histidinol-phosphate aminotransferase 1 (350 aa).

Lys210 carries the N6-(pyridoxal phosphate)lysine modification.

It belongs to the class-II pyridoxal-phosphate-dependent aminotransferase family. Histidinol-phosphate aminotransferase subfamily. Homodimer. Pyridoxal 5'-phosphate serves as cofactor.

The catalysed reaction is L-histidinol phosphate + 2-oxoglutarate = 3-(imidazol-4-yl)-2-oxopropyl phosphate + L-glutamate. The protein operates within amino-acid biosynthesis; L-histidine biosynthesis; L-histidine from 5-phospho-alpha-D-ribose 1-diphosphate: step 7/9. This chain is Histidinol-phosphate aminotransferase 1, found in Pseudomonas fluorescens (strain Pf0-1).